The chain runs to 200 residues: RPW8-like protein 4 (200 aa).

The 157-residue stretch at 1 to 157 (MPIAELAVIK…MKAIQVDQWT (157 aa)) folds into the RPW8 domain. A helical membrane pass occupies residues 7-29 (AVIKTVGGPLIAAALGVGAQVIY). Positions 70 to 127 (REVHESLTRLLEDAKSIIEKYWKLRWSRHVCRKYRYIKKLESIELELVRVAREIQVHQ) form a coiled coil.

The protein belongs to the plant RPW8 protein family.

The protein localises to the membrane. Its function is as follows. Probable disease resistance (R) protein. This is RPW8-like protein 4 (HR4) from Arabidopsis thaliana (Mouse-ear cress).